Consider the following 860-residue polypeptide: RNA-dependent RNA polymerase (860 aa).

A disordered region spans residues 839–860 (PFSSSESDEPRAKEIGPNRGPE). A compositionally biased stretch (basic and acidic residues) spans 846-860 (DEPRAKEIGPNRGPE).

This sequence belongs to the ssRNA positive-strand viruses RNA-directed RNA polymerase family.

The catalysed reaction is RNA(n) + a ribonucleoside 5'-triphosphate = RNA(n+1) + diphosphate. Its function is as follows. RNA-dependent RNA polymerase which replicates the viral genome. This is RNA-dependent RNA polymerase from Ourmia melon virus (isolate Melon/Iran/VE9) (OuMV).